The sequence spans 426 residues: Glutamyl-tRNA reductase (426 aa).

Substrate-binding positions include 49-52 (TCNR), Ser110, 115-117 (EAQ), and Gln121. Residue Cys50 is the Nucleophile of the active site. An NADP(+)-binding site is contributed by 191-196 (GAGEMA).

The protein belongs to the glutamyl-tRNA reductase family. As to quaternary structure, homodimer.

It carries out the reaction (S)-4-amino-5-oxopentanoate + tRNA(Glu) + NADP(+) = L-glutamyl-tRNA(Glu) + NADPH + H(+). The protein operates within porphyrin-containing compound metabolism; protoporphyrin-IX biosynthesis; 5-aminolevulinate from L-glutamyl-tRNA(Glu): step 1/2. Its function is as follows. Catalyzes the NADPH-dependent reduction of glutamyl-tRNA(Glu) to glutamate 1-semialdehyde (GSA). In Rhodopirellula baltica (strain DSM 10527 / NCIMB 13988 / SH1), this protein is Glutamyl-tRNA reductase.